The primary structure comprises 157 residues: 2-C-methyl-D-erythritol 2,4-cyclodiphosphate synthase (157 aa).

A divalent metal cation is bound by residues D8 and H10. 4-CDP-2-C-methyl-D-erythritol 2-phosphate-binding positions include 8-10 (DVH) and 34-35 (HS). H42 serves as a coordination point for a divalent metal cation. 4-CDP-2-C-methyl-D-erythritol 2-phosphate is bound by residues 56 to 58 (DIG), 132 to 135 (TTNE), and R142.

It belongs to the IspF family. Homotrimer. A divalent metal cation is required as a cofactor.

It catalyses the reaction 4-CDP-2-C-methyl-D-erythritol 2-phosphate = 2-C-methyl-D-erythritol 2,4-cyclic diphosphate + CMP. Its pathway is isoprenoid biosynthesis; isopentenyl diphosphate biosynthesis via DXP pathway; isopentenyl diphosphate from 1-deoxy-D-xylulose 5-phosphate: step 4/6. Its function is as follows. Involved in the biosynthesis of isopentenyl diphosphate (IPP) and dimethylallyl diphosphate (DMAPP), two major building blocks of isoprenoid compounds. Catalyzes the conversion of 4-diphosphocytidyl-2-C-methyl-D-erythritol 2-phosphate (CDP-ME2P) to 2-C-methyl-D-erythritol 2,4-cyclodiphosphate (ME-CPP) with a corresponding release of cytidine 5-monophosphate (CMP). This is 2-C-methyl-D-erythritol 2,4-cyclodiphosphate synthase from Chlorobium phaeovibrioides (strain DSM 265 / 1930) (Prosthecochloris vibrioformis (strain DSM 265)).